Consider the following 232-residue polypeptide: Ribonuclease 3 (232 aa).

Residues Ala7 to Gly136 enclose the RNase III domain. Glu49 lines the Mg(2+) pocket. Asp53 is a catalytic residue. The Mg(2+) site is built by Asn122 and Glu125. Residue Glu125 is part of the active site. A DRBM domain is found at Asp163–Glu232.

Belongs to the ribonuclease III family. As to quaternary structure, homodimer. It depends on Mg(2+) as a cofactor.

Its subcellular location is the cytoplasm. The enzyme catalyses Endonucleolytic cleavage to 5'-phosphomonoester.. Its function is as follows. Digests double-stranded RNA. Involved in the processing of primary rRNA transcript to yield the immediate precursors to the large and small rRNAs (23S and 16S). Processes some mRNAs, and tRNAs when they are encoded in the rRNA operon. Processes pre-crRNA and tracrRNA of type II CRISPR loci if present in the organism. In Syntrophotalea carbinolica (strain DSM 2380 / NBRC 103641 / GraBd1) (Pelobacter carbinolicus), this protein is Ribonuclease 3.